We begin with the raw amino-acid sequence, 391 residues long: Oxytocin receptor (391 aa).

Topologically, residues 1–38 (MEGAFAANWSAEAVNGSAAPPGTEGNRTAGPPQRNEAL) are extracellular. Asn8, Asn15, and Asn26 each carry an N-linked (GlcNAc...) asparagine glycan. Residues 39–63 (ARVEVAVLCLILFLALSGNACVLLA) traverse the membrane as a helical segment. The Cytoplasmic segment spans residues 64-74 (LRTTRHKHSRL). A helical transmembrane segment spans residues 75 to 97 (FFFMKHLSIADLVVAVFQVLPQL). Over 98–113 (LWDITFRFYGPDLLCR) the chain is Extracellular. A disulfide bridge links Cys112 with Cys187. Residues 114-135 (LVKYLQVVGMFASTYLLLLMSL) form a helical membrane-spanning segment. At 136 to 154 (DRCLAICQPLRSLSRRTDR) the chain is on the cytoplasmic side. The chain crosses the membrane as a helical span at residues 155-175 (LAVLVTWLGCLVASAPQVHIF). Residues 176 to 202 (SLREVADGVFDCWAVFIQPWGPKAYIT) lie on the Extracellular side of the membrane. A helical transmembrane segment spans residues 203 to 225 (WITLAVYIVPVIVLATCYGLISF). The Cytoplasmic segment spans residues 226 to 277 (KIWQNLRLKTAAAAAEAAAGAEGEAADWAGRAILARVSNVKLISKAKIRTVK). A helical membrane pass occupies residues 278 to 296 (MTFIVVLAFIVCWTPFFFV). Topologically, residues 297-311 (QMWSVWDADAPKEAS) are extracellular. Residues 312–334 (PFIIAMLLASLNSCCNPWIYMLF) form a helical membrane-spanning segment. At 335–391 (TGHLFQELVQRFLCCSFRRLKGSRPGETSVSKKSNSSTFVLSQYSSSQRRCSQPSTL) the chain is on the cytoplasmic side. A phosphoserine mark is found at Ser368 and Ser370.

It belongs to the G-protein coupled receptor 1 family. Vasopressin/oxytocin receptor subfamily.

Its subcellular location is the cell membrane. In terms of biological role, receptor for oxytocin. The activity of this receptor is mediated by G proteins which activate a phosphatidylinositol-calcium second messenger system. This is Oxytocin receptor (OXTR) from Bos taurus (Bovine).